The chain runs to 206 residues: Uridine kinase (206 aa).

Residue G11–T18 participates in ATP binding.

This sequence belongs to the uridine kinase family.

The protein localises to the cytoplasm. It carries out the reaction uridine + ATP = UMP + ADP + H(+). The enzyme catalyses cytidine + ATP = CMP + ADP + H(+). It participates in pyrimidine metabolism; CTP biosynthesis via salvage pathway; CTP from cytidine: step 1/3. The protein operates within pyrimidine metabolism; UMP biosynthesis via salvage pathway; UMP from uridine: step 1/1. The protein is Uridine kinase of Lactococcus lactis subsp. cremoris (strain MG1363).